The sequence spans 908 residues: Glutamate receptor ionotropic, kainate 2 (908 aa).

The N-terminal stretch at 1 to 31 (MKIIFPILSNPVFRRTVKLLLCLLWIGYSQG) is a signal peptide. Residues 32–561 (TTHVLRFGGI…VFSFLNPLSP (530 aa)) lie on the Extracellular side of the membrane. Residues N67, N73, N275, N378, N412, N423, and N430 are each glycosylated (N-linked (GlcNAc...) asparagine). A disulfide bond links C96 and C347. L-glutamate contacts are provided by P516, A518, and R523. A glycan (N-linked (GlcNAc...) asparagine) is linked at N546. A helical transmembrane segment spans residues 562 to 582 (DIWMYILLAYLGVSCVLFVIA). Over 583–635 (RFSPYEWYNPHPCNPDSDVVENNFTLLNSFWFGVGALMQQGSELMPKALSTRI) the chain is Cytoplasmic. Residues 636–656 (VGGIWWFFTLIIISSYTANLA) traverse the membrane as a helical segment. At 657–819 (AFLTVERMES…KEASALGVQN (163 aa)) the chain is on the extracellular side. L-glutamate-binding residues include A689, T690, and E738. C750 and C804 are disulfide-bonded. The N-linked (GlcNAc...) asparagine glycan is linked to N751. The helical transmembrane segment at 820–840 (IGGIFIVLAAGLVLSVFVAVG) threads the bilayer. Over 841–908 (EFLYKSKKNA…RRLPGKETMA (68 aa)) the chain is Cytoplasmic. A phosphoserine; by PKC mark is found at S846 and S868. Residue K886 forms a Glycyl lysine isopeptide (Lys-Gly) (interchain with G-Cter in SUMO1) linkage.

The protein belongs to the glutamate-gated ion channel (TC 1.A.10.1) family. GRIK2 subfamily. As to quaternary structure, homotetramer and heterotetramer with GRIK5. Tetramers may be formed by the dimerization of dimers. Assembles into a kainate-gated homomeric channel that does not bind AMPA. Can form functional heteromeric receptors with GRIK5. Can form functional heteromeric receptors with GRIK3 and GRIK4. Interacts with DLG4. Interacts with NETO2. Interacts (via C-terminus) with KLHL17 (via kelch repeats); the interaction targets GRIK2 for degradation via ubiquitin-proteasome pathway. Sumoylation mediates kainate receptor-mediated endocytosis and regulates synaptic transmission. Sumoylation is enhanced by PIAS3 and desumoylated by SENP1. Post-translationally, ubiquitinated. Ubiquitination regulates the GRIK2 levels at the synapse by leading kainate receptor degradation through proteasome. In terms of processing, phosphorylated by PKC at Ser-868 upon agonist activation, this directly enhance sumoylation. As to expression, expression is higher in cerebellum than in cerebral cortex.

It is found in the cell membrane. Its subcellular location is the postsynaptic cell membrane. It catalyses the reaction Ca(2+)(in) = Ca(2+)(out). The enzyme catalyses Na(+)(in) = Na(+)(out). Cold receptor activity activated by temperatures between 10-19 degrees Celsius. Its function is as follows. Ionotropic glutamate receptor that functions as a cation permeable ligand-gated ion channel, gated by L-glutamate and the glutamatergic agonist kainic acid. L-glutamate acts as an excitatory neurotransmitter at many synapses in the central nervous system. Binding of the excitatory neurotransmitter L-glutamate induces a conformation change, leading to the opening of the cation channel, and thereby converts the chemical signal to an electrical impulse. The receptor then desensitizes rapidly and enters a transient inactive state, characterized by the presence of bound agonist. Modulates cell surface expression of NETO2. In association with GRIK3, involved in presynaptic facilitation of glutamate release at hippocampal mossy fiber synapses. In terms of biological role, independent of its ionotropic glutamate receptor activity, acts as a thermoreceptor conferring sensitivity to cold temperatures. Functions in dorsal root ganglion neurons. The chain is Glutamate receptor ionotropic, kainate 2 (GRIK2) from Homo sapiens (Human).